A 211-amino-acid chain; its full sequence is Thymidylate kinase (211 aa).

ATP is bound at residue 12 to 19; that stretch reads GIDGSGKS.

The protein belongs to the thymidylate kinase family.

It catalyses the reaction dTMP + ATP = dTDP + ADP. Its function is as follows. Phosphorylation of dTMP to form dTDP in both de novo and salvage pathways of dTTP synthesis. In Ruegeria pomeroyi (strain ATCC 700808 / DSM 15171 / DSS-3) (Silicibacter pomeroyi), this protein is Thymidylate kinase.